A 424-amino-acid chain; its full sequence is Adenylyltransferase and sulfurtransferase UBA4 (424 aa).

ATP is bound by residues G76, D97, 104–108, K121, and 165–166; these read TNLHR and DS. The Zn(2+) site is built by C206 and C209. C223 (glycyl thioester intermediate; for adenylyltransferase activity) is an active-site residue. A Zn(2+)-binding site is contributed by C283. The region spanning 326–422 is the Rhodanese domain; it reads RNSDHVLLDV…WYSEVDQNIP (97 aa). The active-site Cysteine persulfide intermediate; for sulfurtransferase activity is C382.

The protein in the N-terminal section; belongs to the HesA/MoeB/ThiF family. UBA4 subfamily. Zn(2+) is required as a cofactor.

Its subcellular location is the cytoplasm. It is found in the cytosol. Its pathway is tRNA modification; 5-methoxycarbonylmethyl-2-thiouridine-tRNA biosynthesis. In terms of biological role, plays a central role in 2-thiolation of mcm(5)S(2)U at tRNA wobble positions of cytosolic tRNA(Lys), tRNA(Glu) and tRNA(Gln). Acts by mediating the C-terminal thiocarboxylation of sulfur carrier URM1. Its N-terminus first activates URM1 as acyl-adenylate (-COAMP), then the persulfide sulfur on the catalytic cysteine is transferred to URM1 to form thiocarboxylation (-COSH) of its C-terminus. The reaction probably involves hydrogen sulfide that is generated from the persulfide intermediate and that acts as a nucleophile towards URM1. Subsequently, a transient disulfide bond is formed. Does not use thiosulfate as sulfur donor; NFS1 probably acting as a sulfur donor for thiocarboxylation reactions. Prior mcm(5) tRNA modification by the elongator complex is required for 2-thiolation. May also be involved in protein urmylation. The sequence is that of Adenylyltransferase and sulfurtransferase UBA4 from Meyerozyma guilliermondii (strain ATCC 6260 / CBS 566 / DSM 6381 / JCM 1539 / NBRC 10279 / NRRL Y-324) (Yeast).